The chain runs to 194 residues: Thiol:disulfide interchange protein CycY (194 aa).

An N-terminal signal peptide occupies residues 1-37 (MSEQSTSANPQRRTFLMVLPLIAFIGLALLFWFRLGS). Residues 46-190 (ALIGRPAPQT…LRSVLLPQME (145 aa)) enclose the Thioredoxin domain. Cys92 and Cys95 are joined by a disulfide.

The protein belongs to the thioredoxin family. DsbE subfamily.

It localises to the periplasm. In terms of biological role, required for disulfide bond formation in some periplasmic proteins. Also acts as a disulfide oxidoreductase in cytochromes c biogenesis. The cysteines of apocytochromes c must be in the reduced state for covalent linkage between the two moieties to occur. The protein is Thiol:disulfide interchange protein CycY (cycY) of Bradyrhizobium diazoefficiens (strain JCM 10833 / BCRC 13528 / IAM 13628 / NBRC 14792 / USDA 110).